The sequence spans 1358 residues: DNA-directed RNA polymerase subunit beta (1358 aa).

This sequence belongs to the RNA polymerase beta chain family. As to quaternary structure, the RNAP catalytic core consists of 2 alpha, 1 beta, 1 beta' and 1 omega subunit. When a sigma factor is associated with the core the holoenzyme is formed, which can initiate transcription.

The catalysed reaction is RNA(n) + a ribonucleoside 5'-triphosphate = RNA(n+1) + diphosphate. Functionally, DNA-dependent RNA polymerase catalyzes the transcription of DNA into RNA using the four ribonucleoside triphosphates as substrates. The sequence is that of DNA-directed RNA polymerase subunit beta from Francisella tularensis subsp. tularensis (strain FSC 198).